We begin with the raw amino-acid sequence, 161 residues long: Nucleotide-binding protein Gmet_3206 (161 aa).

Belongs to the YajQ family.

Nucleotide-binding protein. The polypeptide is Nucleotide-binding protein Gmet_3206 (Geobacter metallireducens (strain ATCC 53774 / DSM 7210 / GS-15)).